The sequence spans 433 residues: Trigger factor (433 aa).

The region spanning 163–248 is the PPIase FKBP-type domain; that stretch reads GDTVNIDFSG…VNEIKFKEVP (86 aa).

The protein belongs to the FKBP-type PPIase family. Tig subfamily.

Its subcellular location is the cytoplasm. The enzyme catalyses [protein]-peptidylproline (omega=180) = [protein]-peptidylproline (omega=0). In terms of biological role, involved in protein export. Acts as a chaperone by maintaining the newly synthesized protein in an open conformation. Functions as a peptidyl-prolyl cis-trans isomerase. This Staphylococcus aureus (strain bovine RF122 / ET3-1) protein is Trigger factor.